The primary structure comprises 135 residues: Photosystem II extrinsic protein V (135 aa).

Heme c-binding residues include C37, C40, H41, and H92.

Belongs to the cytochrome c family. PsbV subfamily. PSII is composed of 1 copy each of membrane proteins PsbA, PsbB, PsbC, PsbD, PsbE, PsbF, PsbH, PsbI, PsbJ, PsbK, PsbL, PsbM, PsbT, PsbX, PsbY, PsbZ, Psb30/Ycf12, peripheral proteins PsbO, CyanoQ (PsbQ), PsbU, PsbV and a large number of cofactors. It forms dimeric complexes. It depends on heme c as a cofactor.

The protein localises to the cellular thylakoid membrane. One of the extrinsic, lumenal subunits of photosystem II (PSII). PSII is a light-driven water plastoquinone oxidoreductase, using light energy to abstract electrons from H(2)O, generating a proton gradient subsequently used for ATP formation. The extrinsic proteins stabilize the structure of photosystem II oxygen-evolving complex (OEC), the ion environment of oxygen evolution and protect the OEC against heat-induced inactivation. Low-potential cytochrome c that plays a role in the OEC of PSII. The protein is Photosystem II extrinsic protein V of Microcystis aeruginosa.